The chain runs to 364 residues: Peptide chain release factor 1 (364 aa).

An N5-methylglutamine modification is found at glutamine 230.

The protein belongs to the prokaryotic/mitochondrial release factor family. In terms of processing, methylated by PrmC. Methylation increases the termination efficiency of RF1.

Its subcellular location is the cytoplasm. Functionally, peptide chain release factor 1 directs the termination of translation in response to the peptide chain termination codons UAG and UAA. This is Peptide chain release factor 1 from Acidothermus cellulolyticus (strain ATCC 43068 / DSM 8971 / 11B).